A 273-amino-acid polypeptide reads, in one-letter code: MLSRRGHRLSRFRKNKRRLRERLRQRIFFRDKVVPEAMEKPRVLVLTGAGISAESGIRTFRAADGLWEEHRVEDVATPEGFDRDPELVQAFYNARRRQLQQPEIQPNAAHLALAKLQDALGDRFLLVTQNIDNLHERAGNTNVIHMHGELLKVRCSQSGQVLDWTGDVTPEDKCHCCQFPAPLRPHVVWFGEMPLGMDEIYMALSMADIFIAIGTSGHVYPAAGFVHEAKLHGAHTVELNLEPSQVGNEFAEKYYGPASQVVPEFVEKLLKGL.

A Deacetylase sirtuin-type domain is found at 20-272 (RERLRQRIFF…PEFVEKLLKG (253 aa)). 48-67 (GAGISAESGIRTFRAADGLW) is an NAD(+) binding site. Residues Y92 and R95 each contribute to the substrate site. 129–132 (QNID) serves as a coordination point for NAD(+). The Proton acceptor role is filled by H147. Zn(2+) is bound by residues C155 and C174. Residues 214-216 (GTS), 240-242 (NLE), and A258 contribute to the NAD(+) site.

Belongs to the sirtuin family. Class III subfamily. The cofactor is Zn(2+).

Its subcellular location is the cytoplasm. The catalysed reaction is N(6)-acetyl-L-lysyl-[protein] + NAD(+) + H2O = 2''-O-acetyl-ADP-D-ribose + nicotinamide + L-lysyl-[protein]. The enzyme catalyses N(6)-succinyl-L-lysyl-[protein] + NAD(+) + H2O = 2''-O-succinyl-ADP-D-ribose + nicotinamide + L-lysyl-[protein]. It carries out the reaction N(6)-(2-hydroxyisobutanoyl)-L-lysyl-[protein] + NAD(+) + H2O = 2''-O-(2-hydroxyisobutanoyl)-ADP-D-ribose + nicotinamide + L-lysyl-[protein]. NAD-dependent lysine deacetylase that specifically removes acetyl groups on target proteins. Also acts as a protein-lysine deacylase by mediating protein desuccinylation and de-2-hydroxyisobutyrylation. Modulates the activities of several proteins which are inactive in their acylated form. In Escherichia coli O157:H7, this protein is NAD-dependent protein deacylase.